The following is a 132-amino-acid chain: DNA-entry nuclease inhibitor (132 aa).

This protein is a subunit of a 75 kDa protein complex, which governs binding and entry of donor DNA. The complex is a tetramer of two subunits of the DNA-entry nuclease and two subunits of a competence-specific protein. Only the complex is able to bind ds- and ss-DNA.

The protein resides in the cell membrane. Functionally, plays a role in the competence of cells to be transformed. It inhibits the activity of the DNA-entry nuclease. This chain is DNA-entry nuclease inhibitor (nin), found in Bacillus subtilis (strain 168).